A 317-amino-acid polypeptide reads, in one-letter code: Porphobilinogen deaminase (317 aa).

Cys-242 is modified (S-(dipyrrolylmethanemethyl)cysteine).

Belongs to the HMBS family. In terms of assembly, monomer. Dipyrromethane is required as a cofactor.

The catalysed reaction is 4 porphobilinogen + H2O = hydroxymethylbilane + 4 NH4(+). It participates in porphyrin-containing compound metabolism; protoporphyrin-IX biosynthesis; coproporphyrinogen-III from 5-aminolevulinate: step 2/4. Tetrapolymerization of the monopyrrole PBG into the hydroxymethylbilane pre-uroporphyrinogen in several discrete steps. The protein is Porphobilinogen deaminase of Colwellia psychrerythraea (strain 34H / ATCC BAA-681) (Vibrio psychroerythus).